Reading from the N-terminus, the 181-residue chain is Crossover junction endodeoxyribonuclease RuvC (181 aa).

Catalysis depends on residues Asp-7, Glu-67, and Asp-139. Mg(2+) contacts are provided by Asp-7, Glu-67, and Asp-139.

The protein belongs to the RuvC family. In terms of assembly, homodimer which binds Holliday junction (HJ) DNA. The HJ becomes 2-fold symmetrical on binding to RuvC with unstacked arms; it has a different conformation from HJ DNA in complex with RuvA. In the full resolvosome a probable DNA-RuvA(4)-RuvB(12)-RuvC(2) complex forms which resolves the HJ. Mg(2+) serves as cofactor.

Its subcellular location is the cytoplasm. The catalysed reaction is Endonucleolytic cleavage at a junction such as a reciprocal single-stranded crossover between two homologous DNA duplexes (Holliday junction).. The RuvA-RuvB-RuvC complex processes Holliday junction (HJ) DNA during genetic recombination and DNA repair. Endonuclease that resolves HJ intermediates. Cleaves cruciform DNA by making single-stranded nicks across the HJ at symmetrical positions within the homologous arms, yielding a 5'-phosphate and a 3'-hydroxyl group; requires a central core of homology in the junction. The consensus cleavage sequence is 5'-(A/T)TT(C/G)-3'. Cleavage occurs on the 3'-side of the TT dinucleotide at the point of strand exchange. HJ branch migration catalyzed by RuvA-RuvB allows RuvC to scan DNA until it finds its consensus sequence, where it cleaves and resolves the cruciform DNA. This chain is Crossover junction endodeoxyribonuclease RuvC, found in Ralstonia pickettii (strain 12J).